A 208-amino-acid polypeptide reads, in one-letter code: N-(5'-phosphoribosyl)anthranilate isomerase (208 aa).

The protein belongs to the TrpF family.

It catalyses the reaction N-(5-phospho-beta-D-ribosyl)anthranilate = 1-(2-carboxyphenylamino)-1-deoxy-D-ribulose 5-phosphate. It functions in the pathway amino-acid biosynthesis; L-tryptophan biosynthesis; L-tryptophan from chorismate: step 3/5. The chain is N-(5'-phosphoribosyl)anthranilate isomerase from Staphylococcus haemolyticus (strain JCSC1435).